We begin with the raw amino-acid sequence, 361 residues long: 5-formaminoimidazole-4-carboxamide-1-(beta)-D-ribofuranosyl 5'-monophosphate synthetase (361 aa).

5-amino-1-(5-phospho-beta-D-ribosyl)imidazole-4-carboxamide is bound by residues His27 and Ser94. Residues 116 to 348 form the ATP-grasp domain; that stretch reads RQILRWEAER…MGQRIAKEIK (233 aa). ATP-binding positions include 146–208 and Glu230; that span reads PDEI…TNYC. Residue Asn258 coordinates 5-amino-1-(5-phospho-beta-D-ribosyl)imidazole-4-carboxamide. Mg(2+) contacts are provided by Gln297 and Glu310.

It belongs to the phosphohexose mutase family. The cofactor is Mg(2+). It depends on Mn(2+) as a cofactor.

The catalysed reaction is 5-amino-1-(5-phospho-beta-D-ribosyl)imidazole-4-carboxamide + formate + ATP = 5-formamido-1-(5-phospho-D-ribosyl)imidazole-4-carboxamide + ADP + phosphate. It functions in the pathway purine metabolism; IMP biosynthesis via de novo pathway; 5-formamido-1-(5-phospho-D-ribosyl)imidazole-4-carboxamide from 5-amino-1-(5-phospho-D-ribosyl)imidazole-4-carboxamide (formate route): step 1/1. In terms of biological role, catalyzes the ATP- and formate-dependent formylation of 5-aminoimidazole-4-carboxamide-1-beta-d-ribofuranosyl 5'-monophosphate (AICAR) to 5-formaminoimidazole-4-carboxamide-1-beta-d-ribofuranosyl 5'-monophosphate (FAICAR) in the absence of folates. The polypeptide is 5-formaminoimidazole-4-carboxamide-1-(beta)-D-ribofuranosyl 5'-monophosphate synthetase (Methanococcus aeolicus (strain ATCC BAA-1280 / DSM 17508 / OCM 812 / Nankai-3)).